The sequence spans 434 residues: Tol-Pal system protein TolB (434 aa).

The first 21 residues, 1–21 (MTVRRALALAALALAVSPALA), serve as a signal peptide directing secretion. Positions 411-434 (GDRQTPVTSGKTDLAAPAWGPLAP) are disordered.

The protein belongs to the TolB family. The Tol-Pal system is composed of five core proteins: the inner membrane proteins TolA, TolQ and TolR, the periplasmic protein TolB and the outer membrane protein Pal. They form a network linking the inner and outer membranes and the peptidoglycan layer.

It is found in the periplasm. Part of the Tol-Pal system, which plays a role in outer membrane invagination during cell division and is important for maintaining outer membrane integrity. In Anaeromyxobacter dehalogenans (strain 2CP-1 / ATCC BAA-258), this protein is Tol-Pal system protein TolB.